A 208-amino-acid polypeptide reads, in one-letter code: 3-demethoxyubiquinol 3-hydroxylase (208 aa).

Fe cation is bound by residues glutamate 57, glutamate 87, histidine 90, glutamate 139, glutamate 171, and histidine 174.

It belongs to the COQ7 family. Fe cation is required as a cofactor.

The protein localises to the cell membrane. The enzyme catalyses a 5-methoxy-2-methyl-3-(all-trans-polyprenyl)benzene-1,4-diol + AH2 + O2 = a 3-demethylubiquinol + A + H2O. Its pathway is cofactor biosynthesis; ubiquinone biosynthesis. Functionally, catalyzes the hydroxylation of 2-nonaprenyl-3-methyl-6-methoxy-1,4-benzoquinol during ubiquinone biosynthesis. This chain is 3-demethoxyubiquinol 3-hydroxylase, found in Burkholderia thailandensis (strain ATCC 700388 / DSM 13276 / CCUG 48851 / CIP 106301 / E264).